A 176-amino-acid polypeptide reads, in one-letter code: Large ribosomal subunit protein uL10 (176 aa).

It belongs to the universal ribosomal protein uL10 family. In terms of assembly, part of the ribosomal stalk of the 50S ribosomal subunit. The N-terminus interacts with L11 and the large rRNA to form the base of the stalk. The C-terminus forms an elongated spine to which L12 dimers bind in a sequential fashion forming a multimeric L10(L12)X complex.

Its function is as follows. Forms part of the ribosomal stalk, playing a central role in the interaction of the ribosome with GTP-bound translation factors. This chain is Large ribosomal subunit protein uL10, found in Coprothermobacter proteolyticus (strain ATCC 35245 / DSM 5265 / OCM 4 / BT).